The following is a 337-amino-acid chain: Major outer membrane protein P.IB (337 aa).

The N-terminal stretch at 1 to 19 is a signal peptide; the sequence is MKKSLIALTLAALPVAAMA.

This sequence belongs to the Gram-negative porin family. Homotrimer.

The protein resides in the cell outer membrane. Serves as a slightly cation selective porin. This Neisseria lactamica protein is Major outer membrane protein P.IB (por).